Here is a 254-residue protein sequence, read N- to C-terminus: Imidazole glycerol phosphate synthase subunit HisF (254 aa).

Catalysis depends on residues aspartate 12 and aspartate 131.

This sequence belongs to the HisA/HisF family. Heterodimer of HisH and HisF.

It localises to the cytoplasm. It carries out the reaction 5-[(5-phospho-1-deoxy-D-ribulos-1-ylimino)methylamino]-1-(5-phospho-beta-D-ribosyl)imidazole-4-carboxamide + L-glutamine = D-erythro-1-(imidazol-4-yl)glycerol 3-phosphate + 5-amino-1-(5-phospho-beta-D-ribosyl)imidazole-4-carboxamide + L-glutamate + H(+). It functions in the pathway amino-acid biosynthesis; L-histidine biosynthesis; L-histidine from 5-phospho-alpha-D-ribose 1-diphosphate: step 5/9. IGPS catalyzes the conversion of PRFAR and glutamine to IGP, AICAR and glutamate. The HisF subunit catalyzes the cyclization activity that produces IGP and AICAR from PRFAR using the ammonia provided by the HisH subunit. This Kocuria rhizophila (strain ATCC 9341 / DSM 348 / NBRC 103217 / DC2201) protein is Imidazole glycerol phosphate synthase subunit HisF.